A 409-amino-acid chain; its full sequence is Probable type I inositol 1,4,5-trisphosphate 5-phosphatase (409 aa).

Belongs to the inositol 1,4,5-trisphosphate 5-phosphatase type I family.

The enzyme catalyses 1D-myo-inositol 1,4,5-trisphosphate + H2O = 1D-myo-inositol 1,4-bisphosphate + phosphate. It carries out the reaction 1D-myo-inositol 1,3,4,5-tetrakisphosphate + H2O = 1D-myo-inositol 1,3,4-trisphosphate + phosphate. This chain is Probable type I inositol 1,4,5-trisphosphate 5-phosphatase (ipp-5), found in Caenorhabditis elegans.